Reading from the N-terminus, the 326-residue chain is DnaJ homolog subfamily B member 6 (326 aa).

Residues 3–69 (DYYEVLGVQK…KKRDIYDRFG (67 aa)) enclose the J domain. The tract at residues 249-326 (ALPFQPTNTR…KKKKSTKGSY (78 aa)) is disordered. Residue serine 277 is modified to Phosphoserine.

As to quaternary structure, homooligomer.

The protein resides in the cytoplasm. The protein localises to the perinuclear region. It localises to the nucleus. Has a stimulatory effect on the ATPase activity of HSP70 in a dose-dependent and time-dependent manner and hence acts as a co-chaperone of HSP70. Plays an indispensable role in the organization of KRT8/KRT18 filaments. Acts as an endogenous molecular chaperone for neuronal proteins including huntingtin. Suppresses aggregation and toxicity of polyglutamine-containing, aggregation-prone proteins. Also reduces cellular toxicity and caspase-3 activity. This Gallus gallus (Chicken) protein is DnaJ homolog subfamily B member 6.